Here is a 402-residue protein sequence, read N- to C-terminus: Protochlorophyllide reductase B, chloroplastic (402 aa).

It belongs to the short-chain dehydrogenases/reductases (SDR) family. POR subfamily.

The protein resides in the plastid. Its subcellular location is the chloroplast. The catalysed reaction is chlorophyllide a + NADP(+) = protochlorophyllide a + NADPH + H(+). It functions in the pathway porphyrin-containing compound metabolism; chlorophyll biosynthesis. Its function is as follows. Phototransformation of protochlorophyllide (Pchlide) to chlorophyllide (Chlide). This is Protochlorophyllide reductase B, chloroplastic (PORB) from Oryza sativa subsp. japonica (Rice).